The sequence spans 4730 residues: Dynein heavy chain, cytoplasmic (4730 aa).

Disordered regions lie at residues 1-23 (MEDQ…VVTP) and 91-120 (TINS…QQQS). The tract at residues 1–1935 (MEDQQINVDS…VIHMANATFY (1935 aa)) is stem. The span at 10-23 (SPTSGTNTPPVVTP) shows a compositional bias: low complexity. Positions 867 to 900 (VRKLSTSINNFRDKVDDLIVKYSEIKKQLDGLKS) form a coiled coil. Residues 964 to 1016 (EDQKDSQSTSGSSNKGGKLNRMNYSIRNKSDEENSSDLTQPQQSQQQQQTISI) are disordered. The segment covering 969-978 (SQSTSGSSNK) has biased composition (polar residues). Low complexity predominate over residues 1002–1016 (TQPQQSQQQQQTISI). Coiled coils occupy residues 1204 to 1224 (EKMN…EKLS), 1343 to 1372 (ALET…QALD), 1425 to 1441 (RKVR…LKNL), and 1661 to 1689 (AIER…YLER). 4 AAA regions span residues 1936-2158 (YGFE…VLVS), 2238-2531 (KKIQ…FTRL), 2635-2885 (EVET…WDRA), and 2978-3252 (VFYE…QGRQ). 1974–1981 (GPAGTGKT) is an ATP binding site. Residues 2231–2253 (IQMDQLRKKIQEIAKQRHLVTKQ) are a coiled coil. Residue 2276–2283 (GPSGGGKT) participates in ATP binding. The disordered stretch occupies residues 2437 to 2486 (EPFDPQEKEQQKRNENAQLQQQQQTTITSPILTSPPTTSSSSRSTTSTTS). Basic and acidic residues predominate over residues 2441–2451 (PQEKEQQKRNE). Positions 2442–2462 (QEKEQQKRNENAQLQQQQQTT) form a coiled coil. Residues 2454-2486 (QLQQQQQTTITSPILTSPPTTSSSSRSTTSTTS) show a composition bias toward low complexity. ATP-binding positions include 2674 to 2681 (GPPGSGKT) and 3016 to 3023 (GVSGGGKS). Coiled-coil stretches lie at residues 3271–3349 (INEK…VQLD), 3483–3585 (AQTY…NTQM), and 3854–3881 (TLET…EISE). Positions 3271 to 3585 (INEKRDQLEE…QQSENFNTQM (315 aa)) are stalk. AAA regions lie at residues 3638-3867 (LSKP…EIAL) and 4098-4312 (SHSF…SIDY). The disordered stretch occupies residues 4432 to 4465 (KMQSSEEDGEDDQVSGSSKKESSSSSSEDKGKAK). The segment covering 4449 to 4463 (SKKESSSSSSEDKGK) has biased composition (basic and acidic residues).

It belongs to the dynein heavy chain family. As to quaternary structure, consists of at least two heavy chains and a number of intermediate and light chains.

It localises to the cytoplasm. The protein localises to the cytoskeleton. Its function is as follows. Cytoplasmic dynein acts as a motor for the intracellular retrograde motility of vesicles and organelles along microtubules. Dynein has ATPase activity; the force-producing power stroke is thought to occur on release of ADP. The polypeptide is Dynein heavy chain, cytoplasmic (dhcA) (Dictyostelium discoideum (Social amoeba)).